The chain runs to 167 residues: Putative lipoprotein YteS (167 aa).

The signal sequence occupies residues 1–20; that stretch reads MTKRIRTALCVIVSVLFLAS. C21 carries the N-palmitoyl cysteine lipid modification. Residue C21 is the site of S-diacylglycerol cysteine attachment.

Its subcellular location is the cell membrane. Functionally, may play a role in the degradation of type I rhamnogalacturonan derived from plant cell walls. The protein is Putative lipoprotein YteS (yteS) of Bacillus subtilis (strain 168).